The sequence spans 138 residues: Large ribosomal subunit protein uL16 (138 aa).

The protein belongs to the universal ribosomal protein uL16 family. As to quaternary structure, part of the 50S ribosomal subunit.

Binds 23S rRNA and is also seen to make contacts with the A and possibly P site tRNAs. The protein is Large ribosomal subunit protein uL16 of Paramagnetospirillum magneticum (strain ATCC 700264 / AMB-1) (Magnetospirillum magneticum).